The sequence spans 77 residues: Tautomerase PptA (77 aa).

Residue proline 2 is the Proton acceptor; via imino nitrogen of the active site.

This sequence belongs to the 4-oxalocrotonate tautomerase family. PptA subfamily. Homodimer.

It is found in the cytoplasm. The sequence is that of Tautomerase PptA from Escherichia coli (strain K12 / MC4100 / BW2952).